Reading from the N-terminus, the 213-residue chain is NADH-quinone oxidoreductase subunit C (213 aa).

This sequence belongs to the complex I 30 kDa subunit family. In terms of assembly, NDH-1 is composed of 14 different subunits. Subunits NuoB, C, D, E, F, and G constitute the peripheral sector of the complex.

It is found in the cell inner membrane. It catalyses the reaction a quinone + NADH + 5 H(+)(in) = a quinol + NAD(+) + 4 H(+)(out). In terms of biological role, NDH-1 shuttles electrons from NADH, via FMN and iron-sulfur (Fe-S) centers, to quinones in the respiratory chain. The immediate electron acceptor for the enzyme in this species is believed to be ubiquinone. Couples the redox reaction to proton translocation (for every two electrons transferred, four hydrogen ions are translocated across the cytoplasmic membrane), and thus conserves the redox energy in a proton gradient. The polypeptide is NADH-quinone oxidoreductase subunit C (Rhodospirillum rubrum (strain ATCC 11170 / ATH 1.1.1 / DSM 467 / LMG 4362 / NCIMB 8255 / S1)).